The chain runs to 330 residues: Phosphate acyltransferase (330 aa).

This sequence belongs to the PlsX family. In terms of assembly, homodimer. Probably interacts with PlsY.

It is found in the cytoplasm. The enzyme catalyses a fatty acyl-[ACP] + phosphate = an acyl phosphate + holo-[ACP]. The protein operates within lipid metabolism; phospholipid metabolism. Functionally, catalyzes the reversible formation of acyl-phosphate (acyl-PO(4)) from acyl-[acyl-carrier-protein] (acyl-ACP). This enzyme utilizes acyl-ACP as fatty acyl donor, but not acyl-CoA. In Bacillus licheniformis (strain ATCC 14580 / DSM 13 / JCM 2505 / CCUG 7422 / NBRC 12200 / NCIMB 9375 / NCTC 10341 / NRRL NRS-1264 / Gibson 46), this protein is Phosphate acyltransferase.